A 537-amino-acid polypeptide reads, in one-letter code: MGETKYIFVTGGVASSLGKGIISSSIGKLLQARGYNVTIQKFDPYINIDPGTLNPYEHGECYVTVDGHEADLDLGHYERFLGIQTTKANNITTGRIYKSVIDKERRGDYLGKTIQVIPHITDEIKRNVKLLGNKYKFDFVITEIGGTVGDIESLPYLESIRQLKWELGKNALCVHLTYVPYLAAAGELKTKPTQHSVKELQSVGIQPDVLVLRAEHPLSDGLRKKVAQFCNVDDKAVVQSIDAETIYEVPLLMQAQGLDSTILEKMGLPVGETPGLGPWRKFLERRHAAETKEPINIALVGKYDLQDAYKSIREALSQAGTYNDRKVEVHFVNSEKLTDENVAEALKGMAGVMIGPGFGQRGIDGKFVAIKYTRTHDIPTFGICLGMQCIAIEFARNVLGYADADSREMDEKTPHNVIDIMEEQKAITNMGGTMRLGAYECVLQKGSKAYLAYGEEHIQERHRHRYEFNNDYKAQYEAAGMKCVGINPESDLVEIVEIPALKWFIGTQFHPEYSSTVLNPHPLFVAFVKAAIENEKN.

An amidoligase domain region spans residues 1–268; sequence MGETKYIFVT…DSTILEKMGL (268 aa). Ser15 lines the CTP pocket. Ser15 contributes to the UTP binding site. 16-21 contributes to the ATP binding site; sequence SLGKGI. Position 56 (Tyr56) interacts with L-glutamine. Asp73 contributes to the ATP binding site. 2 residues coordinate Mg(2+): Asp73 and Glu143. CTP-binding positions include 150–152, 189–194, and Lys225; these read DIE and KTKPTQ. Residues 189 to 194 and Lys225 each bind UTP; that span reads KTKPTQ. One can recognise a Glutamine amidotransferase type-1 domain in the interval 296–537; sequence NIALVGKYDL…VKAAIENEKN (242 aa). Residue Gly357 participates in L-glutamine binding. The active-site Nucleophile; for glutamine hydrolysis is the Cys384. L-glutamine is bound by residues 385–388, Glu408, and Arg465; that span reads LGMQ. Residues His510 and Glu512 contribute to the active site.

This sequence belongs to the CTP synthase family. In terms of assembly, homotetramer.

The catalysed reaction is UTP + L-glutamine + ATP + H2O = CTP + L-glutamate + ADP + phosphate + 2 H(+). It carries out the reaction L-glutamine + H2O = L-glutamate + NH4(+). It catalyses the reaction UTP + NH4(+) + ATP = CTP + ADP + phosphate + 2 H(+). Its pathway is pyrimidine metabolism; CTP biosynthesis via de novo pathway; CTP from UDP: step 2/2. Allosterically activated by GTP, when glutamine is the substrate; GTP has no effect on the reaction when ammonia is the substrate. The allosteric effector GTP functions by stabilizing the protein conformation that binds the tetrahedral intermediate(s) formed during glutamine hydrolysis. Inhibited by the product CTP, via allosteric rather than competitive inhibition. Functionally, catalyzes the ATP-dependent amination of UTP to CTP with either L-glutamine or ammonia as the source of nitrogen. Regulates intracellular CTP levels through interactions with the four ribonucleotide triphosphates. The protein is CTP synthase of Bacteroides thetaiotaomicron (strain ATCC 29148 / DSM 2079 / JCM 5827 / CCUG 10774 / NCTC 10582 / VPI-5482 / E50).